A 222-amino-acid chain; its full sequence is Probable elongation factor 1-beta (222 aa).

Residues 90–111 (KPAADDDDDVDLFGSDDEEDEE) form a disordered region. Residues 94–111 (DDDDDVDLFGSDDEEDEE) are compositionally biased toward acidic residues. Ser104 carries the phosphoserine modification.

Belongs to the EF-1-beta/EF-1-delta family. EF-1 is composed of 4 subunits: alpha, beta, beta' and gamma. In terms of processing, phosphorylation affects the GDP/GTP exchange rate.

In terms of biological role, EF-1-beta and EF-1-delta stimulate the exchange of GDP bound to EF-1-alpha to GTP. This is Probable elongation factor 1-beta from Drosophila melanogaster (Fruit fly).